Here is a 1216-residue protein sequence, read N- to C-terminus: MEMELEPELEEELGVSLDELRKWIEEQVDSSEAVQKRKADLEQLQEWVEQREKEVADIDALCSNASESVVQCEALVKEVYSNMGLVYRESSSDDEGGKANPSEVIEIDDDDDDDVIAVGCLVPPKKSLTQAKDPALKEASAALQRTSQQVQNLAQTVNRTAQSGVTTPVKTGGPPGQGPLAVPAVFMSSAPRNTPTQPNPNIKQDSIKINMTLLGKKRTKTWHRGTLVAIKQVGNNLKYKVRFENKGKSLLSGNHVAFEYHPTLERLFVGARVVARYKDGNQVWLYAGVVAEMPNSKNRMRFLIFFDDGYASYVGLPELYPICRPLKKTWEDIEDASCRDFIEEYITSYPNRPMVLLKPGQIIKTEWEGTWWKSRVEEVDGSLVKMLFLDDKRSEWIYRGSTRLEPMFNLKMNTANSQEKKMAGQQRQRPNMGALRTKGPVVQYTSDNSAAASTGGGAATPGTPTRPVAPQPAGPPQPSRTESPSFKSQMAKKSTGQLALQPRQGMPSDLQPKPIINALQTNTSRLFLLQSGPVHTLTPITPAPQTVQTAISTYTNERVPQEPSYQAPNDRLFYLTHNCSPECLKRIRPTRPNLHRGRNPLLTPLLYEFRRMTGRRRLNRKMSFHVIYKSPCGLSLRNMTEIQRYLFQTQCDFIFLEMFCLDPYVLVDRRFQPQRPFYFIRDITSGREDIPLSCVNEIDNTPPPSVAYSKERIPEDGVYINTSADFLVGCDCTDGCRDKSKCSCHQLTLQATGCTPGGQINPNAGYHYKRLDECLPTGIYECNKRCRCNMQMCTNRLVQHGLQVRLQLFKTQNKGWGIRCLDDIAKGSFVCIYAGKILTDDFADKEGLEMGDEYFANLDHIESVENFKEGYESEAHCSDSEGSGVDMSRVKLPASSRHGKSNKMEERNSSTTGKSQDDSSEESDDEKDDDSNEDDSDSSDDTFVKDTYYTTSSVWRSYTTRRQAKGLKEESQDSKDGMSVSAGEDRKPPHMPEETGKSKVASWLTNQSSTSANQSVKVEGGIKTEKKDVMTLSDSDDVQTISSGSDDNKEREKKTQAVVKRQVAVKSTRGIALKSHSMMVKSGGGGAGGGGSGPSHGHGGGGGDNGPKNTRLFFDGEESCYIIDAKLEGNLGRYLNHSCSPNLFVQNVFVDTHDLRFPWVAFFASKRIRAGTELTWDYNYEVGSVEGKELLCCCGSTECRGRLLQIIKTEWEGTWW.

A coiled-coil region spans residues 38 to 61 (KADLEQLQEWVEQREKEVADIDAL). 2 consecutive Tudor domains span residues 266 to 329 (RLFV…LKKT) and 356 to 412 (LLKP…NLKM). Residues 417–513 (SQEKKMAGQQ…QGMPSDLQPK (97 aa)) form a disordered region. The segment covering 467–478 (PVAPQPAGPPQP) has biased composition (pro residues). The segment covering 482–498 (ESPSFKSQMAKKSTGQL) has biased composition (polar residues). An MBD domain is found at 595-666 (HRGRNPLLTP…EMFCLDPYVL (72 aa)). A Pre-SET domain is found at 728–801 (VGCDCTDGCR…MCTNRLVQHG (74 aa)). Positions 730, 732, 736, 742, 744, 782, 786, 788, and 793 each coordinate Zn(2+). In terms of domain architecture, SET spans 804 to 1179 (VRLQLFKTQN…AGTELTWDYN (376 aa)). S-adenosyl-L-methionine is bound by residues 814–816 (KGW), Asp-852, and Tyr-854. 3 disordered regions span residues 892–944 (LPAS…DTFV), 961–1057 (RRQA…KTQA), and 1081–1108 (KSGGGGAGGGGSGPSHGHGGGGGDNGPK). The segment covering 918–940 (DSSEESDDEKDDDSNEDDSDSSD) has biased composition (acidic residues). Basic and acidic residues-rich tracts occupy residues 966-976 (GLKEESQDSKD) and 983-997 (GEDRKPPHMPEETGK). Polar residues predominate over residues 1003–1016 (WLTNQSSTSANQSV). Composition is skewed to basic and acidic residues over residues 1020 to 1029 (GGIKTEKKDV) and 1046 to 1055 (DDNKEREKKT). A compositionally biased stretch (gly residues) spans 1082-1105 (SGGGGAGGGGSGPSHGHGGGGGDN). S-adenosyl-L-methionine contacts are provided by residues Arg-1133 and 1136-1137 (NH). Zn(2+) contacts are provided by Cys-1139, Cys-1192, Cys-1194, and Cys-1199. The Post-SET domain occupies 1188–1204 (KELLCCCGSTECRGRLL).

The protein belongs to the class V-like SAM-binding methyltransferase superfamily. Histone-lysine methyltransferase family. Suvar3-9 subfamily.

The protein localises to the nucleus. Its subcellular location is the chromosome. The enzyme catalyses L-lysyl(4)-[histone H3] + 3 S-adenosyl-L-methionine = N(6),N(6),N(6)-trimethyl-L-lysyl(4)-[histone H3] + 3 S-adenosyl-L-homocysteine + 3 H(+). Its function is as follows. Histone methyltransferase that specifically trimethylates 'Lys-9' of histone H3. H3 'Lys-9' trimethylation represents a specific tag for epigenetic transcriptional repression by recruiting HP1 (CBX1, CBX3 and/or CBX5) proteins to methylated histones. Mainly functions in euchromatin regions, thereby playing a central role in the silencing of euchromatic genes. H3 'Lys-9' trimethylation is coordinated with DNA methylation. Plays a role in promoter hypermethylation and transcriptional silencing of tumor suppressor genes (TSGs) or other tumor-related genes. Also required to maintain a transcriptionally repressive state of genes in undifferentiated embryonic stem cells (ESCs). Associates at promoter regions of tumor suppressor genes (TSGs) leading to their gene silencing. This chain is Histone-lysine N-methyltransferase SETDB1-B (setdb1b), found in Danio rerio (Zebrafish).